Here is a 430-residue protein sequence, read N- to C-terminus: MKKIHIKTYGCQMNENDSEVAKFYLEEEGYEITNNENDADIVILNTCVVRKKSEDKFYSHIGELKKQNKIIGIMGCGAEKEKEKLFKRGVKFVIGTRAIPLIPQAVERAINGKKSAIFEDKMDEIDYKKILKRNSKHHAWITIIYGCNRFCTYCIVPYTRGREKSRKMDDIINEVENLAKSGIKEVTYLGQNVDAYGKDLNDGSSLAKLLNLTKDIEEIERIWFLTSYPTDFSLDIAHEVANSSKITKNIHLPVQHGSNKILKKMNRRYTIEEYIELINDIRKIVPDASISSDIIVGFPDETEEDFEKTVELVKNIKFERLNLAIYSPREGTIAWKYFEDNVPRIIKTKRMAYILNLQKEINKQLNENYLNKTVEIIVETKAKSGLYYGRDIRNKIIAFEGDKSLIGKKVLVKVKKTTAGPLYGDIIKIL.

The MTTase N-terminal domain maps to 2-111 (KKIHIKTYGC…IPQAVERAIN (110 aa)). The [4Fe-4S] cluster site is built by Cys-11, Cys-47, Cys-76, Cys-147, Cys-151, and Cys-154. The Radical SAM core domain occupies 133 to 364 (RNSKHHAWIT…LNLQKEINKQ (232 aa)). Residues 367–428 (ENYLNKTVEI…AGPLYGDIIK (62 aa)) form the TRAM domain.

The protein belongs to the methylthiotransferase family. MiaB subfamily. Monomer. Requires [4Fe-4S] cluster as cofactor.

The protein localises to the cytoplasm. It catalyses the reaction N(6)-dimethylallyladenosine(37) in tRNA + (sulfur carrier)-SH + AH2 + 2 S-adenosyl-L-methionine = 2-methylsulfanyl-N(6)-dimethylallyladenosine(37) in tRNA + (sulfur carrier)-H + 5'-deoxyadenosine + L-methionine + A + S-adenosyl-L-homocysteine + 2 H(+). Functionally, catalyzes the methylthiolation of N6-(dimethylallyl)adenosine (i(6)A), leading to the formation of 2-methylthio-N6-(dimethylallyl)adenosine (ms(2)i(6)A) at position 37 in tRNAs that read codons beginning with uridine. This is tRNA-2-methylthio-N(6)-dimethylallyladenosine synthase from Thermosipho melanesiensis (strain DSM 12029 / CIP 104789 / BI429).